Reading from the N-terminus, the 255-residue chain is Hemin import ATP-binding protein HmuV (255 aa).

The region spanning 2–238 is the ABC transporter domain; sequence LRAHNLHIRR…ESLKAVFGLE (237 aa). An ATP-binding site is contributed by 34-41; the sequence is GPNGAGKS.

The protein belongs to the ABC transporter superfamily. Heme (hemin) importer (TC 3.A.1.14.5) family. The complex is composed of two ATP-binding proteins (HmuV), two transmembrane proteins (HmuU) and a solute-binding protein (HmuT).

It is found in the cell inner membrane. Its function is as follows. Part of the ABC transporter complex HmuTUV involved in hemin import. Responsible for energy coupling to the transport system. This chain is Hemin import ATP-binding protein HmuV, found in Pseudomonas fluorescens (strain Pf0-1).